The primary structure comprises 221 residues: Probable septum site-determining protein MinC (221 aa).

This sequence belongs to the MinC family. In terms of assembly, interacts with MinD and FtsZ.

Its function is as follows. Cell division inhibitor that blocks the formation of polar Z ring septums. Rapidly oscillates between the poles of the cell to destabilize FtsZ filaments that have formed before they mature into polar Z rings. Prevents FtsZ polymerization. This Shewanella frigidimarina (strain NCIMB 400) protein is Probable septum site-determining protein MinC.